Reading from the N-terminus, the 432-residue chain is Probable M18 family aminopeptidase 2 (432 aa).

Zn(2+) contacts are provided by His86, His157, and His408.

Belongs to the peptidase M18 family. Zn(2+) serves as cofactor.

The chain is Probable M18 family aminopeptidase 2 (apeB) from Streptomyces coelicolor (strain ATCC BAA-471 / A3(2) / M145).